Reading from the N-terminus, the 377-residue chain is Nitric oxide reductase FlRd-NAD(+) reductase (377 aa).

Belongs to the FAD-dependent oxidoreductase family. Requires FAD as cofactor.

Its subcellular location is the cytoplasm. It catalyses the reaction 2 reduced [nitric oxide reductase rubredoxin domain] + NAD(+) + H(+) = 2 oxidized [nitric oxide reductase rubredoxin domain] + NADH. It functions in the pathway nitrogen metabolism; nitric oxide reduction. Functionally, one of at least two accessory proteins for anaerobic nitric oxide (NO) reductase. Reduces the rubredoxin moiety of NO reductase. The chain is Nitric oxide reductase FlRd-NAD(+) reductase from Klebsiella pneumoniae subsp. pneumoniae (strain ATCC 700721 / MGH 78578).